We begin with the raw amino-acid sequence, 398 residues long: Cation channel sperm-associated protein 3 (398 aa).

The Cytoplasmic segment spans residues 1–48 (MSQHRHQRHSRVISSSPVDTTSVGFCPTFKKFKRNDDECRAFVKRVIM). The chain crosses the membrane as a helical span at residues 49–71 (SRFFKIIMISTVTSNAFFMALWT). The Extracellular segment spans residues 72-80 (SYDIRYRLF). The helical transmembrane segment at 81-107 (RLLEFSEIFFVSICTSELSMKVYVDPI) threads the bilayer. Asparagine 108 is a topological domain (cytoplasmic). The chain crosses the membrane as a helical span at residues 109-131 (YWKNGYNLLDVIIIIVMFLPYAL). The Extracellular portion of the chain corresponds to 132–143 (RQLMGKQFTYLY). A helical transmembrane segment spans residues 144-160 (IADGMQSLRILKLIGYS). The Cytoplasmic portion of the chain corresponds to 161 to 168 (QGIRTLIT). A helical membrane pass occupies residues 169-195 (AVGQTVYTVASVLLLLFLLMYIFAILG). Topologically, residues 196–216 (FCLFGSPDNGDHDNWGNLAAA) are extracellular. An intramembrane region (helical; Pore-forming) is located at residues 217–236 (FFTLFSLATVDGWTDLQKQL). The Extracellular segment spans residues 237–242 (DNREFA). A helical membrane pass occupies residues 243–268 (LSRAFTIIFILLASFIFLNMFVGVMI). The Cytoplasmic segment spans residues 269-398 (MHTEDSIRKF…PQSLEKVDEK (130 aa)).

The protein belongs to the cation channel sperm-associated (TC 1.A.1.19) family. Component of the CatSper complex or CatSpermasome composed of the core pore-forming members CATSPER1, CATSPER2, CATSPER3 and CATSPER4 as well as auxiliary members CATSPERB, CATSPERG, CATSPERD, CATSPERE, CATSPERZ, C2CD6/CATSPERT, TMEM249, TMEM262 and EFCAB9. HSPA1 may be an additional auxiliary complex member. The core complex members CATSPER1, CATSPER2, CATSPER3 and CATSPER4 form a heterotetrameric channel. The auxiliary CATSPERB, CATSPERG, CATSPERD and CATSPERE subunits form a pavilion-like structure over the pore which stabilizes the complex through interactions with CATSPER4, CATSPER3, CATSPER1 and CATSPER2 respectively. TMEM262/CATSPERH interacts with CATSPERB, further stabilizing the complex. C2CD6/CATSPERT interacts at least with CATSPERD and is required for targeting the CatSper complex in the flagellar membrane. As to expression, testis-specific.

It is found in the cell projection. The protein resides in the cilium. The protein localises to the flagellum membrane. It catalyses the reaction Ca(2+)(in) = Ca(2+)(out). Its activity is regulated as follows. The CatSper calcium channel is indirectly activated by extracellular progesterone and prostaglandins following the sequence: progesterone &gt; PGF1-alpha = PGE1 &gt; PGA1 &gt; PGE2 &gt;&gt; PGD2. The CatSper calcium channel is directly inhibited by endocannabinoid 2-arachidonoylglycerol (2AG). Indirect activation by progesterone takes place via the following mechanism: progesterone binds and activates the acylglycerol lipase ABHD2, which in turn mediates hydrolysis of 2AG inhibitor, relieving inhibition of the CatSper channel. The primary effect of progesterone activation is to shift voltage dependence towards more physiological, negative membrane potentials; it is not mediated by metabotropic receptors and second messengers. Sperm capacitation enhances the effect of progesterone by providing additional negative shift. Also activated by the elevation of intracellular pH. Its function is as follows. Pore-forming subunit of the CatSper complex, a sperm-specific voltage-gated calcium channel that plays a central role in calcium-dependent physiological responses essential for successful fertilization, such as sperm hyperactivation, acrosome reaction and chemotaxis towards the oocyte. The chain is Cation channel sperm-associated protein 3 (CATSPER3) from Homo sapiens (Human).